The sequence spans 235 residues: Cytidylate kinase (235 aa).

11–19 (GPSGVGKST) serves as a coordination point for ATP.

The protein belongs to the cytidylate kinase family. Type 1 subfamily.

The protein resides in the cytoplasm. It catalyses the reaction CMP + ATP = CDP + ADP. It carries out the reaction dCMP + ATP = dCDP + ADP. The sequence is that of Cytidylate kinase from Syntrophotalea carbinolica (strain DSM 2380 / NBRC 103641 / GraBd1) (Pelobacter carbinolicus).